Here is a 1040-residue protein sequence, read N- to C-terminus: Myoblast growth factor receptor egl-15 (1040 aa).

The N-terminal stretch at 1-19 (MSYFLASCLGVGLLSTVSC) is a signal peptide. Topologically, residues 20-525 (SLQGLTSHYR…PKIDRWTTSD (506 aa)) are extracellular. One can recognise an Ig-like C2-type 1 domain in the interval 33-125 (PRFKHVANER…GQISRNFTVE (93 aa)). Cysteines 55 and 109 form a disulfide. N121 carries N-linked (GlcNAc...) asparagine glycosylation. Over residues 234–257 (VHDSEESPSESRTEFINADEKENK) the composition is skewed to basic and acidic residues. Positions 234 to 267 (VHDSEESPSESRTEFINADEKENKEDEEEDYSVS) are disordered. 2 N-linked (GlcNAc...) asparagine glycosylation sites follow: N280 and N299. Ig-like C2-type domains lie at 287 to 383 (PYFK…FHVI) and 391 to 501 (PPII…ATLT). A disulfide bridge connects residues C314 and C367. N401, N407, N433, N440, N449, N474, and N497 each carry an N-linked (GlcNAc...) asparagine glycan. An intrachain disulfide couples C414 to C485. Residues 526-549 (YIFTTILLFLLLAATLFGILFMVC) form a helical membrane-spanning segment. The Cytoplasmic portion of the chain corresponds to 550–1040 (KQTLHKKGFM…NNNSMSKPEF (491 aa)). The Protein kinase domain occupies 640-931 (LSLVHMLGEG…KTIVDYLDWM (292 aa)). Residues 646–654 (LGEGAFGEV) and K672 each bind ATP. D797 acts as the Proton acceptor in catalysis. Phosphotyrosine; by autocatalysis is present on Y828. 2 disordered regions span residues 952–984 (ERST…LPSE) and 1021–1040 (TPET…KPEF). Over residues 1022–1040 (PETSQRIPSNNNSMSKPEF) the composition is skewed to polar residues.

The protein belongs to the protein kinase superfamily. Tyr protein kinase family. Fibroblast growth factor receptor subfamily. It depends on Mg(2+) as a cofactor. Post-translationally, activity is regulated by the phosphatase clr-1, however it is not known whether clr-1 acts directly on egl-15.

It is found in the membrane. The enzyme catalyses L-tyrosyl-[protein] + ATP = O-phospho-L-tyrosyl-[protein] + ADP + H(+). In terms of biological role, receptor tyrosine kinase required for larval development. May phosphorylate adapter protein soc-1 which in turn may result in the recruitment and/or activation of phosphatase ptp-2. May activate the Ras/MAPK kinase signaling pathway which includes sem-5, sos-1, let-60/Ras, lin-45/Raf, mek-2 and mpk-1. Acts in the hypodermis to regulate axon growth and fluid homeostasis. Activates protein degradation in muscles. Probably following interaction with ligand let-756, negatively regulates membrane protrusion from body wall muscles during larval development. Plays a role in nicotinic acetylcholine receptor (nAChR)-mediated sensitivity to nicotine. Regulates synaptic levels of nAChR subunit lev-1 in the nerve cord. Affects the maintenance of axon position without affecting axon growth. Interaction with egl-17 is required for the guidance of sex myoblast migration during gonad development. Its function is as follows. Interaction with let-756 appears to play a role in maintaining body morphology at higher temperatures. The protein is Myoblast growth factor receptor egl-15 (egl-15) of Caenorhabditis elegans.